The primary structure comprises 334 residues: Phosphatidylglycerol--prolipoprotein diacylglyceryl transferase (334 aa).

Transmembrane regions (helical) follow at residues Phe-22 to Ala-42, Ala-54 to Ala-74, Ile-105 to Ile-125, and Gly-131 to Ile-151. Arg-153 serves as a coordination point for a 1,2-diacyl-sn-glycero-3-phospho-(1'-sn-glycerol). Helical transmembrane passes span Leu-191 to Leu-211 and Phe-251 to Ile-271. The disordered stretch occupies residues Pro-296–Asn-334. The span at Glu-301–Glu-318 shows a compositional bias: acidic residues. The span at His-323–Asn-334 shows a compositional bias: polar residues.

Belongs to the Lgt family.

The protein resides in the cell membrane. The catalysed reaction is L-cysteinyl-[prolipoprotein] + a 1,2-diacyl-sn-glycero-3-phospho-(1'-sn-glycerol) = an S-1,2-diacyl-sn-glyceryl-L-cysteinyl-[prolipoprotein] + sn-glycerol 1-phosphate + H(+). It functions in the pathway protein modification; lipoprotein biosynthesis (diacylglyceryl transfer). In terms of biological role, catalyzes the transfer of the diacylglyceryl group from phosphatidylglycerol to the sulfhydryl group of the N-terminal cysteine of a prolipoprotein, the first step in the formation of mature lipoproteins. The chain is Phosphatidylglycerol--prolipoprotein diacylglyceryl transferase from Leifsonia xyli subsp. xyli (strain CTCB07).